Consider the following 187-residue polypeptide: Elongation factor P (187 aa).

Belongs to the elongation factor P family.

It localises to the cytoplasm. It functions in the pathway protein biosynthesis; polypeptide chain elongation. Involved in peptide bond synthesis. Stimulates efficient translation and peptide-bond synthesis on native or reconstituted 70S ribosomes in vitro. Probably functions indirectly by altering the affinity of the ribosome for aminoacyl-tRNA, thus increasing their reactivity as acceptors for peptidyl transferase. The protein is Elongation factor P of Rhizorhabdus wittichii (strain DSM 6014 / CCUG 31198 / JCM 15750 / NBRC 105917 / EY 4224 / RW1) (Sphingomonas wittichii).